A 309-amino-acid polypeptide reads, in one-letter code: Ribonuclease Z (309 aa).

7 residues coordinate Zn(2+): His63, His65, Asp67, His68, His145, Asp216, and His274. Asp67 functions as the Proton acceptor in the catalytic mechanism.

This sequence belongs to the RNase Z family. Homodimer. The cofactor is Zn(2+).

The catalysed reaction is Endonucleolytic cleavage of RNA, removing extra 3' nucleotides from tRNA precursor, generating 3' termini of tRNAs. A 3'-hydroxy group is left at the tRNA terminus and a 5'-phosphoryl group is left at the trailer molecule.. Functionally, zinc phosphodiesterase, which displays some tRNA 3'-processing endonuclease activity. Probably involved in tRNA maturation, by removing a 3'-trailer from precursor tRNA. The sequence is that of Ribonuclease Z from Streptococcus thermophilus (strain CNRZ 1066).